Reading from the N-terminus, the 300-residue chain is 33 kDa chaperonin (300 aa).

2 cysteine pairs are disulfide-bonded: cysteine 235/cysteine 237 and cysteine 269/cysteine 272.

Belongs to the HSP33 family. Post-translationally, under oxidizing conditions two disulfide bonds are formed involving the reactive cysteines. Under reducing conditions zinc is bound to the reactive cysteines and the protein is inactive.

The protein localises to the cytoplasm. In terms of biological role, redox regulated molecular chaperone. Protects both thermally unfolding and oxidatively damaged proteins from irreversible aggregation. Plays an important role in the bacterial defense system toward oxidative stress. This Pseudomonas fluorescens (strain ATCC BAA-477 / NRRL B-23932 / Pf-5) protein is 33 kDa chaperonin.